The following is a 901-amino-acid chain: Aconitate hydratase A (901 aa).

C443, C509, and C512 together coordinate [4Fe-4S] cluster.

Belongs to the aconitase/IPM isomerase family. In terms of assembly, monomer. It depends on [4Fe-4S] cluster as a cofactor.

It carries out the reaction citrate = D-threo-isocitrate. It catalyses the reaction (2S,3R)-3-hydroxybutane-1,2,3-tricarboxylate = 2-methyl-cis-aconitate + H2O. Its pathway is carbohydrate metabolism; tricarboxylic acid cycle; isocitrate from oxaloacetate: step 2/2. The protein operates within organic acid metabolism; propanoate degradation. Involved in the catabolism of short chain fatty acids (SCFA) via the tricarboxylic acid (TCA)(acetyl degradation route) and probably the 2-methylcitrate cycle I (propionate degradation route). Catalyzes the reversible isomerization of citrate to isocitrate via cis-aconitate. Could catalyze the hydration of 2-methyl-cis-aconitate to yield (2R,3S)-2-methylisocitrate. The apo form of AcnA functions as a RNA-binding regulatory protein. The polypeptide is Aconitate hydratase A (acnA) (Staphylococcus aureus (strain MRSA252)).